A 288-amino-acid chain; its full sequence is Mycothiol S-conjugate amidase (288 aa).

His-12, Asp-15, and His-142 together coordinate Zn(2+).

It belongs to the MshB deacetylase family. Mca subfamily. As to quaternary structure, monomer. It depends on Zn(2+) as a cofactor.

The catalysed reaction is mycothiol S-conjugate + H2O = an N-acetyl-L-cysteine-S-conjugate + 1D-myo-inositol 2-amino-2-deoxy-alpha-D-glucopyranoside. Its activity is regulated as follows. Partially inhibited by MSH when MSmB (a bimane derivative of MSH) is used as substrate. Its function is as follows. A mycothiol (MSH, N-acetyl-cysteinyl-glucosaminyl-inositol) S-conjugate amidase, it recycles conjugated MSH to the N-acetyl cysteine conjugate and the MSH precursor. Involved in MSH-dependent detoxification of a number of alkylating agents and antibiotics. Activity is specific for the mycothiol moiety. In Mycolicibacterium smegmatis (strain ATCC 700084 / mc(2)155) (Mycobacterium smegmatis), this protein is Mycothiol S-conjugate amidase.